The primary structure comprises 589 residues: Threonine--tRNA ligase (589 aa).

Residues 191-487 (DHRKIGKNLG…LLEQTKGNFP (297 aa)) form a catalytic region. C284, H335, and H464 together coordinate Zn(2+).

Belongs to the class-II aminoacyl-tRNA synthetase family. As to quaternary structure, homodimer. It depends on Zn(2+) as a cofactor.

The protein localises to the cytoplasm. It carries out the reaction tRNA(Thr) + L-threonine + ATP = L-threonyl-tRNA(Thr) + AMP + diphosphate + H(+). Functionally, catalyzes the attachment of threonine to tRNA(Thr) in a two-step reaction: L-threonine is first activated by ATP to form Thr-AMP and then transferred to the acceptor end of tRNA(Thr). Also edits incorrectly charged L-seryl-tRNA(Thr). The chain is Threonine--tRNA ligase from Mycoplasmopsis pulmonis (strain UAB CTIP) (Mycoplasma pulmonis).